The chain runs to 200 residues: uncharacterized protein (200 aa).

Residues 7-29 (FFFLFSFISHAMMLTGLIGSSSF) traverse the membrane as a helical segment.

The protein resides in the membrane. This is an uncharacterized protein from Saccharomyces cerevisiae (strain ATCC 204508 / S288c) (Baker's yeast).